The sequence spans 562 residues: Probable malate:quinone oxidoreductase (562 aa).

A disordered region spans residues 535–562 (SATPADPTIAPKNQHSTTYNANSEMQAL). Polar residues predominate over residues 545-562 (PKNQHSTTYNANSEMQAL).

Belongs to the MQO family. Requires FAD as cofactor.

The catalysed reaction is (S)-malate + a quinone = a quinol + oxaloacetate. It participates in carbohydrate metabolism; tricarboxylic acid cycle; oxaloacetate from (S)-malate (quinone route): step 1/1. This is Probable malate:quinone oxidoreductase from Xylella fastidiosa (strain M23).